The chain runs to 281 residues: uncharacterized protein (281 aa).

This is an uncharacterized protein from Mycoplasma genitalium (strain ATCC 33530 / DSM 19775 / NCTC 10195 / G37) (Mycoplasmoides genitalium).